The following is a 333-amino-acid chain: Complement C1q and tumor necrosis factor-related protein 9B (333 aa).

The signal sequence occupies residues 1–19 (MRIWWLLLAIEICTGNINS). Collagen-like domains lie at 24-82 (RQGH…DGKV), 95-154 (GSPG…PGPM), and 155-191 (GPIG…GEKG). Residues 24 to 189 (RQGHPGIPGN…IRGWKGDRGE (166 aa)) form a disordered region. A compositionally biased stretch (low complexity) spans 26 to 40 (GHPGIPGNPGHNGLP). 2 stretches are compositionally biased toward basic and acidic residues: residues 42-55 (RDGR…KGDA) and 69-88 (TSGE…KGIK). The 137-residue stretch at 197-333 (LVLPKSAFTV…FTGFLLFSSQ (137 aa)) folds into the C1q domain.

In terms of assembly, interacts with CTRP9A and ADIPOQ. Forms heterotrimers and heterooligomeric complexes with CTRP9A. Expressed at low levels. Not expressed in adipose tissues.

The protein localises to the secreted. Probable adipokine. Activates AMPK, AKT, and p44/42 MAPK signaling pathways. The sequence is that of Complement C1q and tumor necrosis factor-related protein 9B (C1QTNF9B) from Homo sapiens (Human).